Reading from the N-terminus, the 1021-residue chain is Ribosome quality control complex subunit 2 (1021 aa).

Positions 348 to 388 (IEAQKLKKRAHDRLATAERRLESAKEDQARKLQSLQDAQAT) form a coiled coil. The tract at residues 457-484 (NPESVDNSDESSETSDDDLDDSDDDNKV) is disordered. Residues 462–480 (DNSDESSETSDDDLDDSDD) are compositionally biased toward acidic residues. At Ser478 the chain carries Phosphoserine. Coiled-coil stretches lie at residues 507 to 546 (NARK…DLKR) and 698 to 727 (DEKS…LKME). 2 stretches are compositionally biased toward polar residues: residues 746 to 761 (YNED…TTGS) and 839 to 856 (ISSQ…TPTA). Disordered stretches follow at residues 746-801 (YNED…TALE) and 832-905 (HAAR…VESF). Positions 876 to 905 (DQSRNSEAENEKGLSTEQRDEKKHAKVESF) are enriched in basic and acidic residues.

This sequence belongs to the NEMF family. As to quaternary structure, component of the ribosome quality control complex (RQC), composed of the E3 ubiquitin ligase rkr1/ltn1, rqc1 and mtr1/rqc2, as well as cdc48 and its ubiquitin-binding cofactors associated with the 60S ribosomal subunit. RQC2 binds to the 40S-binding surface of tRNAs.

It localises to the cytoplasm. Its function is as follows. Key component of the ribosome quality control complex (RQC), a ribosome-associated complex that mediates the extraction of incompletely synthesized nascent chains from stalled ribosomes as well as their ubiquitin-mediated proteasomal degradation. Thereby, frees 60S subunit ribosomes from the stalled translation complex and prevents the accumulation of nascent polypeptide chains that are potentially toxic for the cell. Within the RQC complex, mtr1/rqc2 specifically binds stalled 60S ribosomal subunits by recognizing an exposed, nascent chain-conjugated tRNA moiety and promotes the recruitment of rkr1/ltn1 to stalled 60S subunits. Following binding to stalled 60S ribosomal subunits, mtr1/rqc2 mediates CAT tailing by recruiting alanine- and threonine-charged tRNA to the A-site and directing the elongation of stalled nascent chains independently of mRNA or 40S subunits, leading to non-templated C-terminal Ala and Thr extensions (CAT tails). CAT tails promote the rkr1/ltn1-mediated ubiquitination of incompletely synthesized nascent polypeptides: CAT tailing facilitates rkr1/ltn1-dependent ubiquitination by exposing lysine residues that would otherwise remain buried in the ribosomal exit tunnel. Following ubiquitination, incompletely synthesized nascent polypeptides are recognized by CDC48 and degraded by the proteasome. CAT-tailed proteins tend to aggregate and sequester chaperones and can induce proteotoxic stress; their rkr1/ltn1-dependent ubiquitination and degradation is required to prevent proteotoxic stress. This chain is Ribosome quality control complex subunit 2, found in Schizosaccharomyces pombe (strain 972 / ATCC 24843) (Fission yeast).